A 181-amino-acid polypeptide reads, in one-letter code: Oligoribonuclease (181 aa).

Positions Leu8–Leu171 constitute an Exonuclease domain. Tyr129 is an active-site residue.

It belongs to the oligoribonuclease family.

The protein localises to the cytoplasm. In terms of biological role, 3'-to-5' exoribonuclease specific for small oligoribonucleotides. This chain is Oligoribonuclease, found in Vibrio cholerae serotype O1 (strain ATCC 39541 / Classical Ogawa 395 / O395).